A 172-amino-acid chain; its full sequence is Acetolactate synthase small subunit (172 aa).

An ACT domain is found at 4-78 (TLSVLVEDEA…NILKVDNITE (75 aa)).

It belongs to the acetolactate synthase small subunit family. Dimer of large and small chains.

The protein resides in the plastid. It is found in the chloroplast. It carries out the reaction 2 pyruvate + H(+) = (2S)-2-acetolactate + CO2. It functions in the pathway amino-acid biosynthesis; L-isoleucine biosynthesis; L-isoleucine from 2-oxobutanoate: step 1/4. It participates in amino-acid biosynthesis; L-valine biosynthesis; L-valine from pyruvate: step 1/4. The polypeptide is Acetolactate synthase small subunit (ilvH) (Cyanidium caldarium (Red alga)).